The following is a 172-amino-acid chain: Mitochondrial import inner membrane translocase subunit Tim17-B (172 aa).

The cysteines at positions 9 and 78 are disulfide-linked. Helical transmembrane passes span 17-37 (CGGA…IKGF), 61-77 (QIGG…STID), and 113-133 (VGSA…GILL). Residues 146–172 (PFLEDPSQLPPKDGTPAPGYPSYQQYH) are disordered.

This sequence belongs to the Tim17/Tim22/Tim23 family. As to quaternary structure, component of the TIM23 complex at least composed of TIMM23, TIMM17 (TIMM17A or TIMM17B) and TIMM50. The complex interacts with the TIMM44 component of the PAM complex and with DNAJC15. In terms of processing, forms one disulfide bond. Expression is abundant in heart and skeletal muscle, intermediate in brain, and weak in pancreas, placenta, kidney and liver.

The protein localises to the mitochondrion inner membrane. Its function is as follows. Essential component of the TIM23 complex, a complex that mediates the translocation of transit peptide-containing proteins across the mitochondrial inner membrane. The polypeptide is Mitochondrial import inner membrane translocase subunit Tim17-B (TIMM17B) (Homo sapiens (Human)).